Reading from the N-terminus, the 698-residue chain is UvrABC system protein B (698 aa).

The Helicase ATP-binding domain maps to 35–210 (ARLQAGEKDI…TFRVRGDTVE (176 aa)). 48–55 (GATGTGKS) serves as a coordination point for ATP. The Beta-hairpin motif lies at 101–124 (YYDYYQPEAYVPSSDTYIEKDSSI). The Helicase C-terminal domain occupies 438–604 (QIDDLLAEIN…PLRKRIGDIT (167 aa)). Residues 654–689 (AELIQELTDQMHVAAGELQFEVAARLRDEISDLKKE) enclose the UVR domain.

The protein belongs to the UvrB family. Forms a heterotetramer with UvrA during the search for lesions. Interacts with UvrC in an incision complex.

The protein localises to the cytoplasm. Functionally, the UvrABC repair system catalyzes the recognition and processing of DNA lesions. A damage recognition complex composed of 2 UvrA and 2 UvrB subunits scans DNA for abnormalities. Upon binding of the UvrA(2)B(2) complex to a putative damaged site, the DNA wraps around one UvrB monomer. DNA wrap is dependent on ATP binding by UvrB and probably causes local melting of the DNA helix, facilitating insertion of UvrB beta-hairpin between the DNA strands. Then UvrB probes one DNA strand for the presence of a lesion. If a lesion is found the UvrA subunits dissociate and the UvrB-DNA preincision complex is formed. This complex is subsequently bound by UvrC and the second UvrB is released. If no lesion is found, the DNA wraps around the other UvrB subunit that will check the other stand for damage. This chain is UvrABC system protein B, found in Beutenbergia cavernae (strain ATCC BAA-8 / DSM 12333 / CCUG 43141 / JCM 11478 / NBRC 16432 / NCIMB 13614 / HKI 0122).